We begin with the raw amino-acid sequence, 1454 residues long: ABC transporter G family member 43 (1454 aa).

Residues 23-47 (ARSLRDGDDPFRRSAAASRRDAGDD) form a disordered region. The segment covering 25–44 (SLRDGDDPFRRSAAASRRDA) has biased composition (basic and acidic residues). The N-linked (GlcNAc...) asparagine glycan is linked to N163. Positions 170-444 (EGLVSLFISS…FESAGFRCPE (275 aa)) constitute an ABC transporter 1 domain. ATP is bound at residue 204 to 211 (GPPSSGKS). N393 carries N-linked (GlcNAc...) asparagine glycosylation. The region spanning 524-735 (LKAVMSREWL…SNNALSVNEF (212 aa)) is the ABC transmembrane type-2 1 domain. Helical transmembrane passes span 540-560 (FLFI…MTLF), 577-597 (VGAL…ELQL), 613-630 (FFPA…KVPL), 637-656 (LWIV…GRFF), 659-679 (FLAY…LGAI), and 684-704 (VVAN…GGFL). N-linked (GlcNAc...) asparagine glycosylation is present at N745. A helical transmembrane segment spans residues 775-795 (IGAMIGFMIVFNILYLCALTF). Residues 804–823 (TVVSDDDTKSELEAESNQEQ) form a disordered region. N-linked (GlcNAc...) asparagine glycosylation is found at N829 and N832. The ABC transporter 2 domain occupies 852-1104 (LSFNHMNYYV…ILVEYFEAIP (253 aa)). 897 to 904 (GVSGAGKT) contributes to the ATP binding site. The N-linked (GlcNAc...) asparagine glycan is linked to N951. Residues 1178–1391 (QCVANTWKQF…TIYGVIASQF (214 aa)) enclose the ABC transmembrane type-2 2 domain. Transmembrane regions (helical) follow at residues 1196-1216 (YNAM…TVFW), 1236-1256 (YAAV…VVSV), 1284-1304 (FCYS…MIGY), 1314-1334 (FLFF…MLVA), 1341-1361 (LAAV…GFII), 1372-1392 (WFYW…SQFA), and 1423-1443 (FLGY…FLFG).

This sequence belongs to the ABC transporter superfamily. ABCG family. PDR (TC 3.A.1.205) subfamily. As to expression, specifically expressed in the vasculature of roots, stems, panicles, sheaths and leaves.

The protein resides in the cell membrane. Its function is as follows. ABC transporter modulating cadmium (Cd) import, thus controlling Cd(2+) accumulation to prevent phytotoxicity. Confers high tolerance to Cd in yeast. Prevents leaf bacteria proliferation, such as Xanthomonas oryzae pv. oryzicola (Xoc) RS105 and X.oryzae pv. oryzae (Xoo) PXO99, by triggering Cd accumulation, which in turn impairs bacterial virulence factors. This is ABC transporter G family member 43 from Oryza sativa subsp. japonica (Rice).